Consider the following 387-residue polypeptide: TSC22 domain family protein 4 (387 aa).

Disordered stretches follow at residues 1-85 and 135-232; these read MSGG…GEPY and ISTP…RRDG. Residues 28–51 are compositionally biased toward pro residues; sequence SDPPAPPAPAGPPPRLPNGEPNPD. The residue at position 57 (T57) is a Phosphothreonine. S62 and S165 each carry phosphoserine. T183 bears the Phosphothreonine mark. 2 positions are modified to phosphoserine: S187 and S189. A Phosphothreonine modification is found at T223. Residues S254, S258, and S271 each carry the phosphoserine modification. Residues 336-357 are leucine-zipper; it reads LKEQIRDLAERNAALEQENGLL. Residue S362 is modified to Phosphoserine. The segment at 368–387 is disordered; the sequence is QLPSSGLPRLGPSAPNGPSI.

The protein belongs to the TSC-22/Dip/Bun family. In terms of assembly, forms a homodimer or heterodimer. Forms a heterodimer with TSC22D1 isoforms 1 and 2. Interacts with NRBP1.

It localises to the nucleus. The protein localises to the cytoplasm. The protein resides in the cell projection. Its subcellular location is the dendrite. It is found in the synapse. Its function is as follows. Binds DNA and acts as a transcriptional repressor. Involved in the regulation of systematic glucose homeostasis and insulin sensitivity, via transcriptional repression of downstream insulin signaling targets such as OBP2A/LCN13. Acts as a negative regulator of lipogenic gene expression in hepatocytes and thereby mediates the control of very low-density lipoprotein release. May play a role in neurite elongation and survival. This is TSC22 domain family protein 4 from Rattus norvegicus (Rat).